The sequence spans 731 residues: Gelsolin (731 aa).

The tract at residues 2–125 (VVEHPEFLKA…YKKGGVASGF (124 aa)) is actin-severing. The stretch at 25 to 107 (FDLVPVPPNL…VQGFESATFL (83 aa)) is one Gelsolin-like 1 repeat. A Phosphotyrosine modification is found at tyrosine 35. 6 residues coordinate Ca(2+): glycine 41, aspartate 42, glutamate 73, aspartate 85, glycine 90, and alanine 92. The interval 72–75 (DESG) is actin-actin interfilament contact point. 111-118 (KSGLKYKK) is an a 1,2-diacyl-sn-glycero-3-phospho-(1D-myo-inositol-4,5-bisphosphate) binding site. Ca(2+) is bound at residue valine 121. 137–145 (RLLQVKGRR) is a binding site for a 1,2-diacyl-sn-glycero-3-phospho-(1D-myo-inositol-4,5-bisphosphate). The stretch at 147–219 (VRATEVPVSW…FEEGAEPEAM (73 aa)) is one Gelsolin-like 2 repeat. The Ca(2+) site is built by glycine 162 and aspartate 163. Cysteine 164 and cysteine 177 are disulfide-bonded. The Ca(2+) site is built by glutamate 185, aspartate 235, glutamate 278, aspartate 279, and glutamate 303. One copy of the Gelsolin-like 3 repeat lies at 266 to 338 (DENPFAQGAL…LPEGGETPLF (73 aa)). Tyrosine 358 and tyrosine 414 each carry phosphotyrosine. The interval 383-731 (AAQHGMDDDG…LDRALAELAA (349 aa)) is actin-binding, Ca-sensitive. A Gelsolin-like 4 repeat occupies 404-485 (SNKVPVDPAT…VQGKEPAHLM (82 aa)). Residues glycine 420, aspartate 421, glutamate 451, aspartate 463, glycine 468, proline 470, and threonine 500 each contribute to the Ca(2+) site. Position 533 is an N6-acetyllysine (lysine 533). One copy of the Gelsolin-like 5 repeat lies at 533 to 591 (KAGALNSNDAFVLKTPSAAYLWVGAGASEAEKTGAQELLRVLRAQPVQVAEGSEPDSFW). Ca(2+) is bound by residues asparagine 540 and aspartate 541. The residue at position 552 (tyrosine 552) is a Phosphotyrosine. Position 563 (glutamate 563) interacts with Ca(2+). Residue tyrosine 600 is modified to Phosphotyrosine. A Gelsolin-like 6 repeat occupies 630–705 (IEEVPGEFMQ…VKQGFEPPSF (76 aa)). Ca(2+)-binding residues include aspartate 645, aspartate 646, and glutamate 668. Threonine 691 is modified (phosphothreonine).

Belongs to the villin/gelsolin family. As to quaternary structure, binds to actin and to fibronectin. Identified in a complex composed of ACTA1, COBL, GSN and TMSB4X. Interacts with the inactive form of EIF2AK2/PKR. Interacts with FLII.

It localises to the cytoplasm. It is found in the cytoskeleton. Calcium-regulated, actin-modulating protein that binds to the plus (or barbed) ends of actin monomers or filaments, preventing monomer exchange (end-blocking or capping). It can promote the assembly of monomers into filaments (nucleation) as well as sever filaments already formed. Plays a role in ciliogenesis. The polypeptide is Gelsolin (GSN) (Equus caballus (Horse)).